A 454-amino-acid polypeptide reads, in one-letter code: tRNA modification GTPase MnmE (454 aa).

Arginine 23, glutamate 80, and lysine 120 together coordinate (6S)-5-formyl-5,6,7,8-tetrahydrofolate. A TrmE-type G domain is found at 216-377 (GMKVVIAGRP…LRDHLKQSMG (162 aa)). Asparagine 226 provides a ligand contact to K(+). Residues 226–231 (NAGKSS), 245–251 (TAIAGTT), 270–273 (DTAG), 335–338 (NKAD), and 358–360 (SAR) contribute to the GTP site. Serine 230 serves as a coordination point for Mg(2+). Threonine 245, isoleucine 247, and threonine 250 together coordinate K(+). Threonine 251 contributes to the Mg(2+) binding site. Lysine 454 contributes to the (6S)-5-formyl-5,6,7,8-tetrahydrofolate binding site.

Belongs to the TRAFAC class TrmE-Era-EngA-EngB-Septin-like GTPase superfamily. TrmE GTPase family. In terms of assembly, homodimer. Heterotetramer of two MnmE and two MnmG subunits. K(+) is required as a cofactor.

It is found in the cytoplasm. Its function is as follows. Exhibits a very high intrinsic GTPase hydrolysis rate. Involved in the addition of a carboxymethylaminomethyl (cmnm) group at the wobble position (U34) of certain tRNAs, forming tRNA-cmnm(5)s(2)U34. This is tRNA modification GTPase MnmE from Pectobacterium atrosepticum (strain SCRI 1043 / ATCC BAA-672) (Erwinia carotovora subsp. atroseptica).